A 207-amino-acid chain; its full sequence is Ras-related protein Rab7A (207 aa).

Residues 15–22 (GDSGVGKT), 63–67 (DTAGQ), and 125–128 (NKID) each bind GTP. 2 S-geranylgeranyl cysteine lipidation sites follow: Cys-205 and Cys-207. Cys-207 carries the cysteine methyl ester modification.

Belongs to the small GTPase superfamily. Rab family.

The protein resides in the cell membrane. Protein transport. Probably involved in vesicular traffic. The polypeptide is Ras-related protein Rab7A (Mesembryanthemum crystallinum (Common ice plant)).